Consider the following 136-residue polypeptide: Cancer/testis antigen 62 (136 aa).

Residues 1–22 are disordered; the sequence is MMHTTSYRRLSPPHLTDQPSAY.

As to expression, testis specific. Expressed in cancer cell lines.

This Homo sapiens (Human) protein is Cancer/testis antigen 62 (CT62).